A 163-amino-acid polypeptide reads, in one-letter code: Sperm surface protein Sp17 (163 aa).

Disordered regions lie at residues 57–115 (PAEW…EKEE) and 129–163 (VARE…THEK). 2 stretches are compositionally biased toward basic and acidic residues: residues 62 to 98 (SKVE…KEEE) and 129 to 139 (VAREEVKKMKT). The IQ domain occupies 114–143 (EEVAAVKIQAAFRGHVAREEVKKMKTDSLQ). The segment covering 153–163 (DTGFTSRTHEK) has biased composition (polar residues).

As to quaternary structure, homodimer. May interact with ROPN1. Testis- and sperm-specific.

Its subcellular location is the membrane. Sperm surface zona pellucida binding protein. Helps to bind spermatozoa to the zona pellucida with high affinity. Might function in binding zona pellucida and carbohydrates. The protein is Sperm surface protein Sp17 (SPA17) of Papio hamadryas (Hamadryas baboon).